The following is a 255-amino-acid chain: Sporulation-specific N-acetylmuramoyl-L-alanine amidase (255 aa).

One can recognise a MurNAc-LAA domain in the interval 4–172 (IFIDPGHGGS…LARGHANGLE (169 aa)). Positions 10, 24, and 79 each coordinate Zn(2+). The active site involves E141. The 75-residue stretch at 180 to 254 (TSSSGLYKVQ…AGFDAIVILE (75 aa)) folds into the SPOR domain. 2 consecutive repeat copies span residues 184–219 (GLYKVQIGAFKVKANADSLASNAEAKGFDSIVLLKD) and 220–255 (GLYKVQIGAFSSKDNADTLAARAKNAGFDAIVILES). The tract at residues 184-255 (GLYKVQIGAF…GFDAIVILES (72 aa)) is 2 X 35 AA approximate tandem repeats.

This sequence belongs to the N-acetylmuramoyl-L-alanine amidase 3 family. Zn(2+) is required as a cofactor.

Its subcellular location is the secreted. The protein resides in the cell wall. The catalysed reaction is Hydrolyzes the link between N-acetylmuramoyl residues and L-amino acid residues in certain cell-wall glycopeptides.. Inhibited by EDTA. Autolysins are involved in some important biological processes such as cell separation, cell-wall turnover, competence for genetic transformation, formation of the flagella - in particular of its basal body - and sporulation. CwlC is able to hydrolyze type A cell walls such as B.subtilis. Its main function is to lyze the mother cell wall peptidoglycan, playing a role during sporulation. This Bacillus subtilis (strain 168) protein is Sporulation-specific N-acetylmuramoyl-L-alanine amidase (cwlC).